Consider the following 124-residue polypeptide: Glycine cleavage system H protein (124 aa).

Positions 22–104 constitute a Lipoyl-binding domain; sequence VATVGITEFA…YGAGWLFRVE (83 aa). At lysine 63 the chain carries N6-lipoyllysine.

It belongs to the GcvH family. The glycine cleavage system is composed of four proteins: P, T, L and H. It depends on (R)-lipoate as a cofactor.

In terms of biological role, the glycine cleavage system catalyzes the degradation of glycine. The H protein shuttles the methylamine group of glycine from the P protein to the T protein. The polypeptide is Glycine cleavage system H protein (Beutenbergia cavernae (strain ATCC BAA-8 / DSM 12333 / CCUG 43141 / JCM 11478 / NBRC 16432 / NCIMB 13614 / HKI 0122)).